A 324-amino-acid chain; its full sequence is Biotin synthase 1 (324 aa).

Residues 37–256 form the Radical SAM core domain; sequence NAIETASLLS…VALARILMPA (220 aa). [4Fe-4S] cluster contacts are provided by Cys-52, Cys-56, and Cys-59. [2Fe-2S] cluster is bound by residues Cys-96, Cys-127, Cys-187, and Arg-260.

This sequence belongs to the radical SAM superfamily. Biotin synthase family. Homodimer. Requires [4Fe-4S] cluster as cofactor. It depends on [2Fe-2S] cluster as a cofactor.

The catalysed reaction is (4R,5S)-dethiobiotin + (sulfur carrier)-SH + 2 reduced [2Fe-2S]-[ferredoxin] + 2 S-adenosyl-L-methionine = (sulfur carrier)-H + biotin + 2 5'-deoxyadenosine + 2 L-methionine + 2 oxidized [2Fe-2S]-[ferredoxin]. It participates in cofactor biosynthesis; biotin biosynthesis; biotin from 7,8-diaminononanoate: step 2/2. Its function is as follows. Catalyzes the conversion of dethiobiotin (DTB) to biotin by the insertion of a sulfur atom into dethiobiotin via a radical-based mechanism. This chain is Biotin synthase 1, found in Paracoccus denitrificans (strain Pd 1222).